We begin with the raw amino-acid sequence, 391 residues long: Phosphopentomutase (391 aa).

Residue aspartate 14 participates in Mn(2+) binding. The segment at 61 to 88 (IQGVPPDPAPTAFHGRMAERSEGKDTTT) is disordered. Positions 76 to 87 (RMAERSEGKDTT) are enriched in basic and acidic residues. 5 residues coordinate Mn(2+): aspartate 286, histidine 291, aspartate 327, histidine 328, and histidine 339.

Belongs to the phosphopentomutase family. The cofactor is Mn(2+).

It is found in the cytoplasm. The enzyme catalyses 2-deoxy-alpha-D-ribose 1-phosphate = 2-deoxy-D-ribose 5-phosphate. The catalysed reaction is alpha-D-ribose 1-phosphate = D-ribose 5-phosphate. The protein operates within carbohydrate degradation; 2-deoxy-D-ribose 1-phosphate degradation; D-glyceraldehyde 3-phosphate and acetaldehyde from 2-deoxy-alpha-D-ribose 1-phosphate: step 1/2. In terms of biological role, isomerase that catalyzes the conversion of deoxy-ribose 1-phosphate (dRib-1-P) and ribose 1-phosphate (Rib-1-P) to deoxy-ribose 5-phosphate (dRib-5-P) and ribose 5-phosphate (Rib-5-P), respectively. This is Phosphopentomutase from Anaeromyxobacter dehalogenans (strain 2CP-C).